The sequence spans 382 residues: Galactokinase (382 aa).

34-37 (EHTD) serves as a coordination point for substrate. An ATP-binding site is contributed by 124–130 (GAGLSSS). Mg(2+) is bound by residues serine 130 and glutamate 162. Aspartate 174 functions as the Proton acceptor in the catalytic mechanism. Tyrosine 223 is a binding site for substrate.

It belongs to the GHMP kinase family. GalK subfamily.

It is found in the cytoplasm. The catalysed reaction is alpha-D-galactose + ATP = alpha-D-galactose 1-phosphate + ADP + H(+). The protein operates within carbohydrate metabolism; galactose metabolism. Catalyzes the transfer of the gamma-phosphate of ATP to D-galactose to form alpha-D-galactose-1-phosphate (Gal-1-P). The sequence is that of Galactokinase from Salmonella arizonae (strain ATCC BAA-731 / CDC346-86 / RSK2980).